Here is a 211-residue protein sequence, read N- to C-terminus: PITH domain-containing protein CG6153 (211 aa).

The 173-residue stretch at 20–192 (DHALEMGIEY…GVTICNYESR (173 aa)) folds into the PITH domain.

It belongs to the PITHD1 family.

The protein is PITH domain-containing protein CG6153 of Drosophila melanogaster (Fruit fly).